We begin with the raw amino-acid sequence, 160 residues long: uncharacterized protein (160 aa).

It is found in the plastid. This is an uncharacterized protein from Euglena longa (Euglenophycean alga).